Here is a 1134-residue protein sequence, read N- to C-terminus: Ovochymase-1 (1134 aa).

The signal sequence occupies residues 1-22 (MGLLASAGLLLLLVIGHPRSLG). The propeptide at 23–46 (LKCGIRMVNMKSKEPAVGSRFFSR) is activation peptide. A Peptidase S1 1 domain is found at 38–296 (AVGSRFFSRI…LMDFITQNLF (259 aa)). An N-linked (GlcNAc...) asparagine glycan is attached at Asn52. Cysteines 72 and 88 form a disulfide. The active-site Charge relay system is the His87. N-linked (GlcNAc...) asparagine glycosylation is present at Asn99. Residue Glu116 participates in Ca(2+) binding. Residue Asp139 is the Charge relay system of the active site. 3 cysteine pairs are disulfide-bonded: Cys173–Cys243, Cys204–Cys222, and Cys233–Cys262. Catalysis depends on Ser237, which acts as the Charge relay system. CUB domains lie at 284-410 (VSEL…VTAV) and 419-531 (CGSL…FTIL). A glycan (N-linked (GlcNAc...) asparagine) is linked at Asn324. 3 disulfides stabilise this stretch: Cys341–Cys373, Cys419–Cys446, and Cys473–Cys494. An N-linked (GlcNAc...) asparagine glycan is attached at Asn431. Asn507 carries an N-linked (GlcNAc...) asparagine glycan. In terms of domain architecture, Peptidase S1 2 spans 575–812 (IAGGEEACPH…FLDWIQSKIN (238 aa)). Cysteines 600 and 616 form a disulfide. Catalysis depends on charge relay system residues His615 and Asp664. 4 disulfides stabilise this stretch: Cys698/Cys769, Cys729/Cys747, Cys759/Cys788, and Cys846/Cys873. Catalysis depends on Ser763, which acts as the Charge relay system. The CUB 3 domain occupies 846–957 (CSEAELEKPR…GAFGISYIVL (112 aa)). The N-linked (GlcNAc...) asparagine glycan is linked to Asn1106.

This sequence belongs to the peptidase S1 family.

Its subcellular location is the secreted. In Homo sapiens (Human), this protein is Ovochymase-1 (OVCH1).